We begin with the raw amino-acid sequence, 272 residues long: Soluble interferon gamma receptor OPG193 (272 aa).

The N-terminal stretch at 1-13 (MRYIIILAVLFIN) is a signal peptide. Residues Asn-42, Asn-150, and Asn-267 are each glycosylated (N-linked (GlcNAc...) asparagine; by host).

Belongs to the type II cytokine receptor family. Homodimer. Interacts with host IFNG.

Its subcellular location is the secreted. Its function is as follows. Counteracts the antiviral effects of host IFN-gamma. Acts as a soluble IFN-gamma receptor and thus inhibits the interaction between host IFN-gamma and its receptor. This chain is Soluble interferon gamma receptor OPG193 (OPG193), found in Homo sapiens (Human).